A 442-amino-acid chain; its full sequence is Putative zinc metalloprotease PM1991 (442 aa).

Zn(2+) is bound at residue His21. The active site involves Glu22. His25 serves as a coordination point for Zn(2+). A helical transmembrane segment spans residues 97-119; the sequence is AFVIAAGPIANFLFAILAYFTIY. The region spanning 198-286 is the PDZ domain; that stretch reads DWRFDPEKES…FSFVVLTPEL (89 aa). The next 2 membrane-spanning stretches (helical) occupy residues 366–388 and 418–440; these read IGLI…MNLF and LSYR…NDFL.

It belongs to the peptidase M50B family. The cofactor is Zn(2+).

The protein localises to the cell inner membrane. This Pasteurella multocida (strain Pm70) protein is Putative zinc metalloprotease PM1991.